A 147-amino-acid chain; its full sequence is MIFAVRTMVGQEKNIAGLMASRAEKEQLDVYSILASESLKGYVLVEAETKGDVEELIKGMPRVRGIVPGTIAIEEIEPLLTPKKIIENIEKGDVVEIIAGPFKGERAKVIRVDKHKEEVTLELENAAVPIPITLPVEGVKIVSKHKD.

Residues 91 to 122 (KGDVVEIIAGPFKGERAKVIRVDKHKEEVTLE) form the KOW domain.

The protein belongs to the archaeal Spt5 family. As to quaternary structure, heterodimer composed of Spt4 and Spt5. Interacts with RNA polymerase (RNAP). Forms a homodimer in solution.

Its function is as follows. Stimulates transcription elongation. This chain is Transcription elongation factor Spt5, found in Methanocaldococcus jannaschii (strain ATCC 43067 / DSM 2661 / JAL-1 / JCM 10045 / NBRC 100440) (Methanococcus jannaschii).